Reading from the N-terminus, the 451-residue chain is UDP-N-acetylmuramate--L-alanine ligase (451 aa).

110–116 (GTHGKTT) serves as a coordination point for ATP.

It belongs to the MurCDEF family.

Its subcellular location is the cytoplasm. It carries out the reaction UDP-N-acetyl-alpha-D-muramate + L-alanine + ATP = UDP-N-acetyl-alpha-D-muramoyl-L-alanine + ADP + phosphate + H(+). It participates in cell wall biogenesis; peptidoglycan biosynthesis. Its function is as follows. Cell wall formation. The polypeptide is UDP-N-acetylmuramate--L-alanine ligase (Francisella tularensis subsp. tularensis (strain SCHU S4 / Schu 4)).